An 882-amino-acid chain; its full sequence is Protein PML (882 aa).

A disordered region spans residues methionine 1–serine 48. Phosphoserine; by HIPK2 is present on serine 8. Phosphoserine; by HIPK2 and MAPK1 is present on residues serine 36 and serine 38. At serine 48 the chain carries Phosphoserine. Zn(2+)-binding residues include cysteine 57 and cysteine 60. The segment at cysteine 57–glutamine 92 adopts an RING-type zinc-finger fold. Lysine 65 is covalently cross-linked (Glycyl lysine isopeptide (Lys-Gly) (interchain with G-Cter in SUMO1); alternate). Residue lysine 65 forms a Glycyl lysine isopeptide (Lys-Gly) (interchain with G-Cter in SUMO2); alternate linkage. 6 residues coordinate Zn(2+): cysteine 72, histidine 74, cysteine 77, cysteine 80, cysteine 88, and cysteine 91. Residue serine 117 is modified to Phosphoserine; by CHEK2. A B box-type 1; atypical zinc finger spans residues aspartate 124–leucine 166. Zn(2+) is bound by residues cysteine 129, cysteine 132, cysteine 151, and histidine 155. Lysine 160 is covalently cross-linked (Glycyl lysine isopeptide (Lys-Gly) (interchain with G-Cter in SUMO1); alternate). Residue lysine 160 forms a Glycyl lysine isopeptide (Lys-Gly) (interchain with G-Cter in SUMO2); alternate linkage. A Glycyl lysine isopeptide (Lys-Gly) (interchain with G-Cter in SUMO1P1/SUMO5); alternate cross-link involves residue lysine 160. Residues lysine 183–arginine 236 form a B box-type 2 zinc finger. Residues cysteine 189, histidine 194, cysteine 215, and histidine 222 each contribute to the Zn(2+) site. The stretch at aspartate 228 to alanine 253 forms a coiled coil. Lysine 380 participates in a covalent cross-link: Glycyl lysine isopeptide (Lys-Gly) (interchain with G-Cter in SUMO2); alternate. Lysine 380 participates in a covalent cross-link: Glycyl lysine isopeptide (Lys-Gly) (interchain with G-Cter in /SUMO5); alternate. Lysine 380 is covalently cross-linked (Glycyl lysine isopeptide (Lys-Gly) (interchain with G-Cter in ubiquitin); alternate). Lysine 394 participates in a covalent cross-link: Glycyl lysine isopeptide (Lys-Gly) (interchain with G-Cter in SUMO2). Lysine 400 is covalently cross-linked (Glycyl lysine isopeptide (Lys-Gly) (interchain with G-Cter in SUMO1P1/SUMO5); alternate). Glycyl lysine isopeptide (Lys-Gly) (interchain with G-Cter in ubiquitin); alternate cross-links involve residues lysine 400 and lysine 401. Residue lysine 401 forms a Glycyl lysine isopeptide (Lys-Gly) (interchain with G-Cter in SUMO2); alternate linkage. Serine 403 is modified (phosphoserine; by MAPK1 and MAPK7). Residues glycine 448–arginine 555 form an interaction with PER2 region. Residue lysine 460 forms a Glycyl lysine isopeptide (Lys-Gly) (interchain with G-Cter in SUMO2) linkage. The tract at residues aspartate 467–glycine 589 is disordered. A compositionally biased stretch (polar residues) spans valine 468 to cysteine 484. Residue lysine 476 forms a Glycyl lysine isopeptide (Lys-Gly) (interchain with G-Cter in SUMO2); alternate linkage. Lysine 476 participates in a covalent cross-link: Glycyl lysine isopeptide (Lys-Gly) (interchain with G-Cter in ubiquitin); alternate. Positions lysine 476–lysine 490 match the Nuclear localization signal motif. Residue lysine 478 forms a Glycyl lysine isopeptide (Lys-Gly) (interchain with G-Cter in SUMO2) linkage. Residues lysine 487 and lysine 490 each participate in a glycyl lysine isopeptide (Lys-Gly) (interchain with G-Cter in SUMO2); alternate cross-link. Residue lysine 487 is modified to N6-acetyllysine; alternate. The segment covering isoleucine 489–leucine 501 has biased composition (basic and acidic residues). A Glycyl lysine isopeptide (Lys-Gly) (interchain with G-Cter in SUMO1); alternate cross-link involves residue lysine 490. A Glycyl lysine isopeptide (Lys-Gly) (interchain with G-Cter in SUMO1P1/SUMO5); alternate cross-link involves residue lysine 490. Position 493 is a phosphoserine (serine 493). Lysine 497 participates in a covalent cross-link: Glycyl lysine isopeptide (Lys-Gly) (interchain with G-Cter in SUMO1); alternate. A Glycyl lysine isopeptide (Lys-Gly) (interchain with G-Cter in SUMO2); alternate cross-link involves residue lysine 497. Residue lysine 497 forms a Glycyl lysine isopeptide (Lys-Gly) (interchain with G-Cter in SUMO1P1/SUMO5); alternate linkage. Serine 504 is modified (phosphoserine). A Phosphoserine; by MAPK1 modification is found at serine 505. Polar residues predominate over residues serine 505–alanine 516. Serine 512 carries the post-translational modification Phosphoserine. N6-acetyllysine is present on lysine 515. 3 positions are modified to phosphoserine: serine 518, serine 527, and serine 530. The residue at position 518 (serine 518) is a Phosphoserine; by CDK1 and CDK2. A phosphoserine; by MAPK1 mark is found at serine 527 and serine 530. The tract at residues valine 556–serine 562 is sumo interaction motif (SIM). At serine 565 the chain carries Phosphoserine. Residue serine 565 is modified to Phosphoserine; by CK2. Position 867 is a phosphothreonine (threonine 867).

Key component of PML bodies. PML bodies are formed by the interaction of PML homodimers (via SUMO-binding motif) with sumoylated PML, leading to the assembly of higher oligomers. Several types of PML bodies have been observed. PML bodies can form hollow spheres that can sequester target proteins inside. Interacts (via SUMO-binding motif) with sumoylated proteins. Interacts (via C-terminus) with p53/TP53. Recruits p53/TP53 and CHEK2 into PML bodies, which promotes p53/TP53 phosphorylation at 'Ser-20' and prevents its proteasomal degradation. Interacts with MDM2, and sequesters MDM2 in the nucleolus, thereby preventing ubiquitination of p53/TP53. Interaction with PML-RARA oncoprotein and certain viral proteins causes disassembly of PML bodies and abolishes the normal PML function. Interacts with HIPK2, TERT, SIRT1, TOPBP1, TRIM27 and TRIM69. Interacts with ELF4 (via C-terminus). Interacts with ITPR3. Interacts (in the cytoplasm) with TGFBR1, TGFBR2 and PKM. Interacts (via the coiled-coil domain and when sumoylated) with SATB1. Interacts with UBE2I; the interaction is enhanced by arsenic binding. Interacts (PML-RARA oncoprotein, via the coiled-coil domain) with UBE2I; the interaction is enhanced by arsenic binding and is required for PML-RARA oncoprotein sumoylation and inhibition of RARA transactivational activity. Interacts with RB1, PPP1A, SMAD2, SMAD3, DAXX, RPL11 and MTOR. Interacts with PPARGC1A and KAT2A. Interacts with CSNK2A1 and CSNK2A3. Interacts with ANKRD2; the interaction is direct. Interacts (via SUMO-interacting motif) with sumoylated MORC3. Isoform PML-1, isoform PML-2, isoform PML-3, isoform PML-4, isoform PML-5 and isoform PML-6 interact with RNF4. Isoform PML-1 interacts with NLRP3. Isoform PML-1, isoform PML-2, isoform PML-3, isoform PML-4 and isoform PML-5 interact with MAGEA2, RBL2, PER2 and E2F4. Isoform PML-2 interacts with CIITA. Isoform PML-2, isoform PML-3 and isoform PML-4 interact with TBX2. Isoform PML-4 interacts with RANBP2, HDAC7, KAT6A, WRN, PIN1, TBX3 and phosphorylated MAPK1/ERK2. Isoform PML-4 interacts with the CTNNB1 and TCF7L2/TCF4 complex. Isoform PML-4 preferentially interacts with MAPK7/BMK1 although other isoforms (isoform PML-1, isoform PML-2, isoform PML-3 and isoform PML-6) also interact with it. Isoform PML-12 interacts with PIAS1, PIAS2 (isoform PIAS2-alpha) and CSNK2A1/CK2. Interacts with TRIM16. Interacts with PRDM1/Blimp-1. Interacts (via RING-type zinc finger) with EIF4E; the interaction results in conformational changes of both interacting proteins and reduces EIF4E affinity for the 5' m7G cap of mRNA, thus reducing EIF4E-mediated mRNA nuclear export. In terms of assembly, (Microbial infection) Interacts with Lassa virus Z protein and rabies virus phosphoprotein. As to quaternary structure, (Microbial infection) Isoform PML-1 interacts with herpes simplex virus-1/HHV-1 ICP0. (Microbial infection) Isoform PML-2 interacts with human adenovirus 2 E1A and this interaction stimulates E1A-dependent transcriptional activation. In terms of assembly, (Microbial infection) Isoform PML-4 interacts with VZV capsid protein VP26/ORF23 capsid protein. As to quaternary structure, (Microbial infection) The sumoylated isoform PML-4 interacts with encephalomyocarditis virus (EMCV) RNA-directed RNA polymerase 3D-POL (P3D-POL). (Microbial infection) Isoform PML-6 interacts with moloney murine leukemia virus (MoMLV) integrase (IN) and reverse transcriptase (RT). In terms of assembly, (Microbial infection) Isoform PML-4 and isoform PML-5 interact with human adenovirus 5 E1B-55K protein; these interactions promote efficient subnuclear targeting of E1B-55K to PML nuclear bodies. As to quaternary structure, (Microbial infection) Isoform PML-3 interacts (via RING-type zinc finger) with human foamy virus bel1/tas and bet. (Microbial infection) Interacts with human cytomegalovirus (HHV-5) immediate early protein IE1; this interaction mediates PML desumoylation and PML-mediated sumoylation of IE1. In terms of processing, ubiquitinated; mediated by RNF4, RNF111, UHRF1, UBE3A/E6AP, BCR(KLHL20) E3 ubiquitin ligase complex E3 ligase complex, SIAH1 or SIAH2 and leading to subsequent proteasomal degradation. Ubiquitination by BCR(KLHL20) E3 ubiquitin ligase complex E3 ligase complex requires CDK1/2-mediated phosphorylation at Ser-518 which in turn is recognized by prolyl-isopeptidase PIN1 and PIN1-catalyzed isomerization further potentiates PML interaction with KLHL20. 'Lys-6'-, 'Lys-11'-, 'Lys-48'- and 'Lys-63'-linked polyubiquitination by RNF4 is polysumoylation-dependent. Ubiquitination by RNF111 is polysumoylation-dependent. Sumoylation regulates PML's: stability in response to extracellular or intracellular stimuli, transcription directly and indirectly, through sequestration of or dissociation of the transcription factors from PML-NBs, ability to regulate apoptosis and its anti-viral activities. It is also essential for: maintaining proper PML nuclear bodies (PML-NBs) structure and normal function, recruitment of components of PML-NBs, the turnover and retention of PML in PML-NBs and the integrity of PML-NBs. Undergoes 'Lys-11'-linked sumoylation. Sumoylation on all three sites (Lys-65, Lys-160 and Lys-490) is required for nuclear body formation. Sumoylation on Lys-160 is a prerequisite for sumoylation on Lys-65. Lys-65 and Lys-160 are sumoylated by PISA1 and PIAS2. PIAS1-mediated sumoylation of PML promotes its interaction with CSNK2A1/CK2 and phosphorylation at Ser-565 which in turn triggers its ubiquitin-mediated degradation. PIAS1-mediated sumoylation of PML-RARA promotes its ubiquitin-mediated degradation. The PML-RARA fusion protein requires the coiled-coil domain for sumoylation. Sumoylation at Lys-490 by RANBP2 is essential for the proper assembly of PML-NBs. SUMO1P1/SUMO5 conjugated PML at Lys-160, Lys-380, Lys-400, Lys-490 and Lys-497, but Lys-380, Lys-400 and Lys-497 are not key acceptor lysines. SUMO1P1/SUMO5 forms polymeric chain on Lys-160 of PML by successive conjugation at 'Lys-18'; facilitating recruitment of PML-NB components, which enlarges PML. SUMO1P1/SUMO5 conjugation of PML increases SUMO2/3 conjugation, which leads to the recruitment of RNF4 and ubiquitin-dependent disintegration of PML-NBs. SUMO1P1/SUMO5 monoconjugated Lys-490. DNA damage triggers its sumoylation while some but not all viral infections can abolish sumoylation. Desumoylated by SENP1, SENP2, SENP3, SENP5 and SENP6. Arsenic induces PML and PML-RARA polysumoylation and their subsequent RNF4-dependent ubiquitination and proteasomal degradation, and is used as treatment in acute promyelocytic leukemia (APL). The nuclear isoforms (isoform PML-1, isoform PML-2, isoform PML-3, isoform PML-4, isoform PML-5 and isoform PML-6) show an increased sumoylation in response to arsenic trioxide. The cytoplasmic isoform PML-7 is not sumoylated. Post-translationally, phosphorylation is a major regulatory mechanism that controls PML protein abundance and the number and size of PML nuclear bodies (PML-NBs). Phosphorylated in response to DNA damage, probably by ATR. HIPK2-mediated phosphorylation at Ser-8, Ser-36 and Ser-38 leads to increased accumulation of PML protein and its sumoylation and is required for the maximal pro-apoptotic activity of PML after DNA damage. CHEK2-mediated phosphorylation at Ser-117 is important for PML-mediated apoptosis following DNA damage. MAPK1-mediated phosphorylations at Ser-403, Ser-505, Ser-527 and Ser-530 and CDK1/2-mediated phosphorylation at Ser-518 promote PIN1-dependent PML degradation. CK2-mediated phosphorylation at Ser-565 primes PML ubiquitination via an unidentified ubiquitin ligase. In terms of processing, (Microbial infection) Upon infection with Epstein-Barr virus, phosphorylated by CK2. Viral EBNA1 increases the association of CK2 with PML proteins, which increases PML phosphorylation by CK2, triggering the USP7-dependent polyubiquitylation and degradation of PML. Acetylation at Lys-487 is essential for its nuclear localization. Deacetylated at Lys-487 by SIRT1 and this deacetylation promotes PML control of PER2 nuclear localization. Post-translationally, (Microbial infection) Immediate early protein IE1 of human cytomegalovirus (HHV-5) interferes with the sumoylation of PML. Immediate early protein IE1 inhibits PML de novo sumoylation. In terms of processing, (Microbial infection) Cleaved at two different sites by enterovirus 71 protease 3C, leading to impaired PML-Nuclear bodies formation.

It localises to the nucleus. It is found in the nucleoplasm. The protein localises to the cytoplasm. The protein resides in the PML body. Its subcellular location is the nucleolus. It localises to the endoplasmic reticulum membrane. It is found in the early endosome membrane. It participates in protein modification; protein sumoylation. Its function is as follows. Functions via its association with PML-nuclear bodies (PML-NBs) in a wide range of important cellular processes, including tumor suppression, transcriptional regulation, apoptosis, senescence, DNA damage response, and viral defense mechanisms. Acts as the scaffold of PML-NBs allowing other proteins to shuttle in and out, a process which is regulated by SUMO-mediated modifications and interactions. Inhibits EIF4E-mediated mRNA nuclear export by reducing EIF4E affinity for the 5' 7-methylguanosine (m7G) cap of target mRNAs. Isoform PML-4 has a multifaceted role in the regulation of apoptosis and growth suppression: activates RB1 and inhibits AKT1 via interactions with PP1 and PP2A phosphatases respectively, negatively affects the PI3K pathway by inhibiting MTOR and activating PTEN, and positively regulates p53/TP53 by acting at different levels (by promoting its acetylation and phosphorylation and by inhibiting its MDM2-dependent degradation). Isoform PML-4 also: acts as a transcriptional repressor of TBX2 during cellular senescence and the repression is dependent on a functional RBL2/E2F4 repressor complex, regulates double-strand break repair in gamma-irradiation-induced DNA damage responses via its interaction with WRN, acts as a negative regulator of telomerase by interacting with TERT, and regulates PER2 nuclear localization and circadian function. Isoform PML-6 inhibits specifically the activity of the tetrameric form of PKM. The nuclear isoforms (isoform PML-1, isoform PML-2, isoform PML-3, isoform PML-4 and isoform PML-5) in concert with SATB1 are involved in local chromatin-loop remodeling and gene expression regulation at the MHC-I locus. Isoform PML-2 is required for efficient IFN-gamma induced MHC II gene transcription via regulation of CIITA. Cytoplasmic PML is involved in the regulation of the TGF-beta signaling pathway. PML also regulates transcription activity of ELF4 and can act as an important mediator for TNF-alpha- and IFN-alpha-mediated inhibition of endothelial cell network formation and migration. In terms of biological role, exhibits antiviral activity against both DNA and RNA viruses. The antiviral activity can involve one or several isoform(s) and can be enhanced by the permanent PML-NB-associated protein DAXX or by the recruitment of p53/TP53 within these structures. Isoform PML-4 restricts varicella zoster virus (VZV) via sequestration of virion capsids in PML-NBs thereby preventing their nuclear egress and inhibiting formation of infectious virus particles. The sumoylated isoform PML-4 restricts rabies virus by inhibiting viral mRNA and protein synthesis. The cytoplasmic isoform PML-14 can restrict herpes simplex virus-1 (HHV-1) replication by sequestering the viral E3 ubiquitin-protein ligase ICP0 in the cytoplasm. Isoform PML-6 shows restriction activity towards human cytomegalovirus (HHV-5) and influenza A virus strains PR8(H1N1) and ST364(H3N2). Sumoylated isoform PML-4 and isoform PML-12 show antiviral activity against encephalomyocarditis virus (EMCV) by promoting nuclear sequestration of viral polymerase (P3D-POL) within PML NBs. Isoform PML-3 exhibits antiviral activity against poliovirus by inducing apoptosis in infected cells through the recruitment and the activation of p53/TP53 in the PML-NBs. Isoform PML-3 represses human foamy virus (HFV) transcription by complexing the HFV transactivator, bel1/tas, preventing its binding to viral DNA. PML may positively regulate infectious hepatitis C viral (HCV) production and isoform PML-2 may enhance adenovirus transcription. Functions as an E3 SUMO-protein ligase that sumoylates (HHV-5) immediate early protein IE1, thereby participating in the antiviral response. Isoforms PML-3 and PML-6 display the highest levels of sumoylation activity. This chain is Protein PML (PML), found in Homo sapiens (Human).